The following is a 408-amino-acid chain: Serine/threonine-protein kinase ATG1t (408 aa).

The 266-residue stretch at Tyr-7–Val-272 folds into the Protein kinase domain. ATP-binding positions include Leu-13–Val-21 and Lys-36. Asp-129 acts as the Proton acceptor in catalysis.

It belongs to the protein kinase superfamily. Ser/Thr protein kinase family.

It localises to the cytoplasmic vesicle. The protein resides in the autophagosome. Functionally, serine/threonine protein kinase involved in autophagy. The ATG1-ATG13 protein kinase complex regulates downstream events required for autophagosome enclosure and/or vacuolar delivery. This chain is Serine/threonine-protein kinase ATG1t, found in Arabidopsis thaliana (Mouse-ear cress).